A 537-amino-acid polypeptide reads, in one-letter code: DELLA protein GAI (537 aa).

The interval 1-33 is disordered; sequence MKRDHQEISGSGSNPAESSSIKGKLWEEDPDAG. Positions 9–20 are enriched in low complexity; it reads SGSGSNPAESSS. The DELLA motif signature appears at 37 to 41; sequence DELLA. A disordered region spans residues 131 to 157; it reads KSDPGLEITRKRAKTESSSSSSSTTTR. Residues 147–156 are compositionally biased toward low complexity; it reads SSSSSSSTTT. In terms of domain architecture, GRAS spans 162–533; the sequence is IDSQEAGVRL…RPLIAHLGLA (372 aa). A leucine repeat I (LRI) region spans residues 169–223; the sequence is VRLVHTLMACAEAVQQDNLKLADALVKHIGLLASSQTGAMRKVATYFAEALARRI. A VHIID region spans residues 241–306; that stretch reads QIPFYETCPY…GGPPAFRLTG (66 aa). Positions 272–276 match the VHIID motif; the sequence is VHVID. The segment at 320-352 is leucine repeat II (LRII); sequence QVGWKLAQLAERIGIEFEFRGFVANSLADLEPE. The tract at residues 364–454 is PFYRE; that stretch reads VAVNAVFELH…ELYLGRQICN (91 aa). Positions 372–376 match the LXXLL motif motif; that stretch reads LHPLL. The SAW stretch occupies residues 457 to 533; that stretch reads ACEGMDRVER…RPLIAHLGLA (77 aa).

Belongs to the GRAS family. DELLA subfamily. Phosphorylated. Post-translationally, ubiquitinated. Upon GA application it is ubiquitinated, leading to its subsequent degradation.

Its subcellular location is the nucleus. Its function is as follows. Probable transcriptional regulator that acts as a repressor of the gibberellin (GA) signaling pathway. Probably acts by participating in large multiprotein complexes that represses transcription of GA-inducible genes. Upon GA application, it is degraded by the proteasome, allowing the GA signaling pathway. The sequence is that of DELLA protein GAI (GAI) from Gossypium hirsutum (Upland cotton).